Reading from the N-terminus, the 219-residue chain is PRELI domain-containing protein 1, mitochondrial (219 aa).

Positions 36-174 constitute a PRELI/MSF1 domain; that stretch reads TEDIVHREVT…ILAKLQGEAP (139 aa).

In terms of assembly, forms a complex with TRIAP1 in the mitochondrion intermembrane space. Interacts with OPA1 and AIFM1.

The protein resides in the mitochondrion. Its subcellular location is the mitochondrion intermembrane space. It carries out the reaction a 1,2-diacyl-sn-glycero-3-phosphate(in) = a 1,2-diacyl-sn-glycero-3-phosphate(out). Its function is as follows. Involved in the modulation of the mitochondrial apoptotic pathway by ensuring the accumulation of cardiolipin (CL) in mitochondrial membranes. In vitro, the TRIAP1:PRELID1 complex mediates the transfer of phosphatidic acid (PA) between liposomes and probably functions as a PA transporter across the mitochondrion intermembrane space to provide PA for CL synthesis in the inner membrane. Regulates the mitochondrial apoptotic pathway in primary Th cells. Regulates Th cell differentiation by down-regulating STAT6 thereby reducing IL-4-induced Th2 cell number. May be important for the development of vital and immunocompetent organs. The protein is PRELI domain-containing protein 1, mitochondrial (PRELID1) of Bos taurus (Bovine).